We begin with the raw amino-acid sequence, 180 residues long: Pro-glucagon (180 aa).

An N-terminal signal peptide occupies residues 1–20 (MKSVYFVAGLFIMLAQGSWQ). The segment at 23 to 58 (LQDTEEKPRSVSASQTDMLDDPDQMNEDKRHSQGTF) is disordered. Serine 54 carries the phosphoserine modification. A propeptide spanning residues 84–89 (NRNNIA) is cleaved from the precursor. 2 positions are modified to phosphoserine: serine 105 and serine 108. Arginine 127 is subject to Arginine amide. The propeptide occupies 131–145 (DFPEEVAIVEELGRR). A phosphoserine mark is found at serine 150 and serine 152.

Belongs to the glucagon family. Post-translationally, proglucagon is post-translationally processed in a tissue-specific manner in pancreatic A cells and intestinal L cells. In pancreatic A cells, the major bioactive hormone is glucagon cleaved by PCSK2/PC2. In the intestinal L cells PCSK1/PC1 liberates GLP-1, GLP-2, glicentin and oxyntomodulin. GLP-1 is further N-terminally truncated by post-translational processing in the intestinal L cells resulting in GLP-1(7-37) GLP-1-(7-36)amide. The C-terminal amidation is neither important for the metabolism of GLP-1 nor for its effects on the endocrine pancreas.

It localises to the secreted. In terms of biological role, plays a key role in glucose metabolism and homeostasis. Regulates blood glucose by increasing gluconeogenesis and decreasing glycolysis. A counterregulatory hormone of insulin, raises plasma glucose levels in response to insulin-induced hypoglycemia. Plays an important role in initiating and maintaining hyperglycemic conditions in diabetes. Potent stimulator of glucose-dependent insulin release. Also stimulates insulin release in response to IL6. Plays important roles on gastric motility and the suppression of plasma glucagon levels. May be involved in the suppression of satiety and stimulation of glucose disposal in peripheral tissues, independent of the actions of insulin. Has growth-promoting activities on intestinal epithelium. May also regulate the hypothalamic pituitary axis (HPA) via effects on LH, TSH, CRH, oxytocin, and vasopressin secretion. Increases islet mass through stimulation of islet neogenesis and pancreatic beta cell proliferation. Inhibits beta cell apoptosis. Its function is as follows. Stimulates intestinal growth and up-regulates villus height in the small intestine, concomitant with increased crypt cell proliferation and decreased enterocyte apoptosis. The gastrointestinal tract, from the stomach to the colon is the principal target for GLP-2 action. Plays a key role in nutrient homeostasis, enhancing nutrient assimilation through enhanced gastrointestinal function, as well as increasing nutrient disposal. Stimulates intestinal glucose transport and decreases mucosal permeability. Functionally, significantly reduces food intake. Inhibits gastric emptying in humans. Suppression of gastric emptying may lead to increased gastric distension, which may contribute to satiety by causing a sensation of fullness. In terms of biological role, may modulate gastric acid secretion and the gastro-pyloro-duodenal activity. May play an important role in intestinal mucosal growth in the early period of life. The polypeptide is Pro-glucagon (GCG) (Cavia porcellus (Guinea pig)).